The chain runs to 103 residues: Ubiquitin-related modifier 1 (103 aa).

Residue glycine 103 is modified to 1-thioglycine. Residue glycine 103 forms a Glycyl lysine isopeptide (Gly-Lys) (interchain with K-? in acceptor proteins) linkage.

This sequence belongs to the URM1 family. In terms of processing, C-terminal thiocarboxylation occurs in 2 steps, it is first acyl-adenylated (-COAMP) via the hesA/moeB/thiF part of UBA4, then thiocarboxylated (-COSH) via the rhodanese domain of UBA4.

It localises to the cytoplasm. Its pathway is tRNA modification; 5-methoxycarbonylmethyl-2-thiouridine-tRNA biosynthesis. Its function is as follows. Acts as a sulfur carrier required for 2-thiolation of mcm(5)S(2)U at tRNA wobble positions of cytosolic tRNA(Lys), tRNA(Glu) and tRNA(Gln). Serves as sulfur donor in tRNA 2-thiolation reaction by being thiocarboxylated (-COSH) at its C-terminus by the MOCS3 homolog UBA4. The sulfur is then transferred to tRNA to form 2-thiolation of mcm(5)S(2)U. Prior mcm(5) tRNA modification by the elongator complex is required for 2-thiolation. Also acts as a ubiquitin-like protein (UBL) that is covalently conjugated via an isopeptide bond to lysine residues of target proteins such as AHP1. The thiocarboxylated form serves as substrate for conjugation and oxidative stress specifically induces the formation of UBL-protein conjugates. The protein is Ubiquitin-related modifier 1 of Vanderwaltozyma polyspora (strain ATCC 22028 / DSM 70294 / BCRC 21397 / CBS 2163 / NBRC 10782 / NRRL Y-8283 / UCD 57-17) (Kluyveromyces polysporus).